We begin with the raw amino-acid sequence, 218 residues long: Large ribosomal subunit protein uL4 (218 aa).

Residues 46-100 are disordered; sequence ARQGTHSTKTRAEVRGGGRKPFRQKGTGRARQGSIRAPHFTGGGISHGPKPRDYA. Residues 62–73 are compositionally biased toward basic residues; the sequence is GGRKPFRQKGTG.

The protein belongs to the universal ribosomal protein uL4 family. Part of the 50S ribosomal subunit.

One of the primary rRNA binding proteins, this protein initially binds near the 5'-end of the 23S rRNA. It is important during the early stages of 50S assembly. It makes multiple contacts with different domains of the 23S rRNA in the assembled 50S subunit and ribosome. Functionally, forms part of the polypeptide exit tunnel. This Corynebacterium efficiens (strain DSM 44549 / YS-314 / AJ 12310 / JCM 11189 / NBRC 100395) protein is Large ribosomal subunit protein uL4.